The primary structure comprises 178 residues: DNA-directed RNA polymerase V subunit 7 (178 aa).

Belongs to the eukaryotic RPB7/RPC8 RNA polymerase subunit family. As to quaternary structure, component of the RNA polymerase V complex.

It is found in the nucleus. Its function is as follows. DNA-dependent RNA polymerase catalyzes the transcription of DNA into RNA using the four ribonucleoside triphosphates as substrates. Component of RNA polymerase V involved in RNA-directed DNA methylation-dependent (RdDM) silencing of endogenous repeated sequences, including transposable elements. The sequence is that of DNA-directed RNA polymerase V subunit 7 (NRPE7) from Arabidopsis thaliana (Mouse-ear cress).